The following is a 455-amino-acid chain: Transmembrane protease serine 5 (455 aa).

At 1 to 49 the chain is on the cytoplasmic side; sequence MSPTLDDQSPMEIRCTEEGAGPGIFRMELGDQRQSISQSQRWCCLQRGC. A helical; Signal-anchor for type II membrane protein transmembrane segment spans residues 50–70; that stretch reads VILGVLGLLAGAGIASWLLVL. At 71–455 the chain is on the extracellular side; that stretch reads YLWPAASPSI…DWIHDTVQVR (385 aa). Residues 112–207 form the SRCR domain; it reads FRINGEDLLL…SGRIVSLKCS (96 aa). 7 disulfides stabilise this stretch: Cys-135–Cys-196, Cys-148–Cys-206, Cys-209–Cys-328, Cys-243–Cys-259, Cys-342–Cys-411, Cys-374–Cys-390, and Cys-401–Cys-429. N-linked (GlcNAc...) asparagine glycosylation is found at Asn-163 and Asn-170. Positions 218–453 constitute a Peptidase S1 domain; the sequence is IVGGQAVASG…FLDWIHDTVQ (236 aa). Catalysis depends on charge relay system residues His-258 and Asp-308. Residues Asn-319 and Asn-375 are each glycosylated (N-linked (GlcNAc...) asparagine). Ser-405 serves as the catalytic Charge relay system.

The protein belongs to the peptidase S1 family.

The protein localises to the cell membrane. Functionally, may play a role in hearing. In Mus musculus (Mouse), this protein is Transmembrane protease serine 5 (Tmprss5).